Consider the following 148-residue polypeptide: Large ribosomal subunit protein uL15 (148 aa).

Residues 1 to 30 (MPSRLRKTRKLRGHVSHGHGRIGKHRKHPG) show a composition bias toward basic residues. Positions 1–37 (MPSRLRKTRKLRGHVSHGHGRIGKHRKHPGGRGNAGG) are disordered. Histidine 39 bears the (3S)-3-hydroxyhistidine mark. Residues lysine 47 and lysine 55 each carry the N6-acetyllysine modification. Serine 68 is modified (phosphoserine). Lysine 110 carries the N6-acetyllysine modification.

The protein belongs to the universal ribosomal protein uL15 family. In terms of assembly, component of the large ribosomal subunit. Post-translationally, hydroxylated on His-39 by MINA.

The protein localises to the cytoplasm. In terms of biological role, component of the large ribosomal subunit. The ribosome is a large ribonucleoprotein complex responsible for the synthesis of proteins in the cell. The chain is Large ribosomal subunit protein uL15 (Rpl27a) from Rattus norvegicus (Rat).